A 249-amino-acid chain; its full sequence is NAD kinase (249 aa).

The Proton acceptor role is filled by Asp45. NAD(+)-binding positions include 45 to 46 (DG), Arg50, 110 to 111 (NE), Asp138, and 149 to 154 (SGWGMS).

It belongs to the NAD kinase family. The cofactor is a divalent metal cation.

It is found in the cytoplasm. It carries out the reaction NAD(+) + ATP = ADP + NADP(+) + H(+). Functionally, involved in the regulation of the intracellular balance of NAD and NADP, and is a key enzyme in the biosynthesis of NADP. Catalyzes specifically the phosphorylation on 2'-hydroxyl of the adenosine moiety of NAD to yield NADP. In Saccharolobus islandicus (strain Y.N.15.51 / Yellowstone #2) (Sulfolobus islandicus), this protein is NAD kinase.